The sequence spans 401 residues: Bone morphogenetic protein 4 (401 aa).

Positions 1-19 (MIPGNRMLMVILLSQVLLG) are cleaved as a signal peptide. The propeptide occupies 20-287 (GTNYASLIPD…GHALTRRSKR (268 aa)). N-linked (GlcNAc...) asparagine glycosylation is found at Asn141, Asn204, and Asn238. Positions 279–299 (HALTRRSKRSPKQQRPRKKNK) are disordered. Positions 280-299 (ALTRRSKRSPKQQRPRKKNK) are enriched in basic residues. 3 cysteine pairs are disulfide-bonded: Cys301–Cys366, Cys330–Cys398, and Cys334–Cys400. Asn343 and Asn358 each carry an N-linked (GlcNAc...) asparagine glycan.

Belongs to the TGF-beta family. In terms of assembly, homodimer; disulfide-linked. Forms heterodimers with the TGF-beta family member derriere. Part of a complex consisting of twsg1 and chrd. Interacts with tsku.

The protein resides in the secreted. It is found in the extracellular space. It localises to the extracellular matrix. Functionally, posterior-ventralizing factor in Xenopus mesoderm induction. Induces posteroventral mesoderm and counteracts dorsalizing signals such as activin. In Xenopus laevis (African clawed frog), this protein is Bone morphogenetic protein 4 (bmp4).